We begin with the raw amino-acid sequence, 211 residues long: MEKIKIPKATAKRLPLYYRYLLILNEEGKDKVSSTELSEAVQVDSASIRRDFSYFGALGKRGYGYDVKNLLSFFKKILNQDTLTNVALIGVGNLGRALLNYNFKRSNNIRISCAFDINKEITGRILSGVPVYDMEDLKQQLSDQQISIAILTVPSTAAQRTTDEMVDAGVKGIMNFTPIRLSAPADVRVQNVDLATELQTLIYFLDSEKEN.

Residues 16–55 (LYYRYLLILNEEGKDKVSSTELSEAVQVDSASIRRDFSYF) constitute a DNA-binding region (H-T-H motif). Position 90 to 95 (90 to 95 (GVGNLG)) interacts with NAD(+).

It belongs to the transcriptional regulatory Rex family. In terms of assembly, homodimer.

The protein resides in the cytoplasm. Modulates transcription in response to changes in cellular NADH/NAD(+) redox state. This is Redox-sensing transcriptional repressor Rex from Lactobacillus acidophilus (strain ATCC 700396 / NCK56 / N2 / NCFM).